A 201-amino-acid polypeptide reads, in one-letter code: LexA repressor (201 aa).

The segment at residues 28–48 (LREIAAKLGISGTLGVMKHLE) is a DNA-binding region (H-T-H motif). Active-site for autocatalytic cleavage activity residues include Ser120 and Lys157.

It belongs to the peptidase S24 family. In terms of assembly, homodimer.

It carries out the reaction Hydrolysis of Ala-|-Gly bond in repressor LexA.. Functionally, represses a number of genes involved in the response to DNA damage (SOS response), including recA and lexA. In the presence of single-stranded DNA, RecA interacts with LexA causing an autocatalytic cleavage which disrupts the DNA-binding part of LexA, leading to derepression of the SOS regulon and eventually DNA repair. This Geobacter sp. (strain M21) protein is LexA repressor.